The chain runs to 403 residues: Peptidyl-prolyl cis-trans isomerase FKBP8 (403 aa).

The tract at residues 26 to 54 (VLDGVDDAEEEDDLSGLPPLEDMGQPTVE) is disordered. The segment covering 28–39 (DGVDDAEEEDDL) has biased composition (acidic residues). The region spanning 110-195 (GQVVTVHLQM…CLEVTLKTAE (86 aa)) is the PPIase FKBP-type domain. A TPR 1 repeat occupies 212-245 (ANRKRECGNAHYQRADFVLAANSYDLAIKAITSN). Residues Lys240, Lys262, Lys264, and Lys275 each participate in a glycyl lysine isopeptide (Lys-Gly) (interchain with G-Cter in ubiquitin) cross-link. TPR repeat units follow at residues 263–296 (VKCLNNLAASQLKLDHYRAALRSCSQVLEHQPDN) and 297–330 (IKALFRKGKVLAQQGEYSEAIPILRAALKLEPSN). Ser287 carries the phosphoserine modification. Glycyl lysine isopeptide (Lys-Gly) (interchain with G-Cter in ubiquitin) cross-links involve residues Lys298, Lys305, Lys325, Lys331, Lys339, Lys342, and Lys343. A helical transmembrane segment spans residues 381 to 401 (WLFGATAVALGGVALSVVIAA).

As to quaternary structure, homomultimers or heteromultimers (Potential). Forms heterodimer with calmodulin. When activated by calmodulin and calcium, interacts with the BH4 domain of BCL2 and weakly with BCLX isoform Bcl-X(L). Does not bind and inhibit calcineurin. Interacts with ZFYVE27; may negatively regulate ZFYVE27 phosphorylation. The cofactor is Ca(2+). Post-translationally, ubiquitinated by PRKN during mitophagy, leading to its degradation and enhancement of mitophagy. Deubiquitinated by USP30.

It localises to the mitochondrion membrane. It catalyses the reaction [protein]-peptidylproline (omega=180) = [protein]-peptidylproline (omega=0). Functionally, constitutively inactive PPiase, which becomes active when bound to calmodulin and calcium. Seems to act as a chaperone for BCL2, targets it to the mitochondria and modulates its phosphorylation state. The BCL2/FKBP8/calmodulin/calcium complex probably interferes with the binding of BCL2 to its targets. The active form of FKBP8 may therefore play a role in the regulation of apoptosis. This is Peptidyl-prolyl cis-trans isomerase FKBP8 (Fkbp8) from Rattus norvegicus (Rat).